The primary structure comprises 996 residues: Phototropin-1 (996 aa).

Positions 1–184 (MEPTEKPSTK…PGGRSGIPRV (184 aa)) are disordered. A phosphoserine mark is found at Ser23 and Ser58. The span at 49 to 59 (QNLSDPRGTSP) shows a compositional bias: polar residues. Over residues 60–70 (QPRPQQEPAPS) the composition is skewed to pro residues. The segment covering 141–153 (SGGTENDPNGKKT) has biased composition (polar residues). Positions 155–166 (SQRNSQNSCRSS) are enriched in low complexity. One can recognise a PAS 1 domain in the interval 184-257 (VSEDLKDALS…AKIRETLAAG (74 aa)). Phosphoserine is present on Ser185. Residue Asn233 participates in FMN binding. Residue Cys234 is modified to S-4a-FMN cysteine. The FMN site is built by Arg235, Gln238, Arg251, Asn266, Asn276, Gln297, and Lys302. Residues 258-312 (NNYCGRILNYKKDGTSFWNLLTIAPIKDESGKVLKFIGMQVEVSKHTEGAKEKAL) enclose the PAC 1 domain. Phosphoserine occurs at positions 350, 376, and 410. 2 disordered regions span residues 351–413 (ESTN…SLSF) and 434–453 (YGEEDDEISDRDERPESVDD). Residues 434–443 (YGEEDDEISD) show a composition bias toward acidic residues. Over residues 444–453 (RDERPESVDD) the composition is skewed to basic and acidic residues. At Ser450 the chain carries Phosphoserine. The region spanning 462–535 (KGIDLATTLE…KKIRNAIDNQ (74 aa)) is the PAS 2 domain. Asn511 lines the FMN pocket. Position 512 is an S-4a-FMN cysteine (Cys512). Residues Arg513, Gln516, Arg529, Asn544, Asn554, Phe556, and Gln575 each contribute to the FMN site. One can recognise a PAC 2 domain in the interval 536–590 (TEVTVQLINYTKSGKKFWNIFHLQPMRDQKGEVQYFIGVQLDGSKHVEPVRNVIE). One can recognise a Protein kinase domain in the interval 663–952 (FKPVKPLGSG…ANEVKQHSFF (290 aa)). ATP-binding positions include 669 to 677 (LGSGDTGSV) and Lys692. Asp788 (proton acceptor) is an active-site residue. Positions 806-862 (DFDLSCLTSCKPQLLIPSIDEKKKKKQQKSQQTPIFMAEPMRASNSFVGTEEYIAPE) are activation loop.

It belongs to the protein kinase superfamily. AGC Ser/Thr protein kinase family. Homodimer; disulfide-linked. Interacts with PKS1, PKS2, RPT2, RPT3, PHOT2 and BLUS1. Subunit of a complex made of CAR6, PHOT1 and RPT3/NPH3. Associates with CBC1 and CBC2. Binds to BHP. The cofactor is FMN. Post-translationally, autophosphorylated at Ser-185, Ser-350 and Ser-410 in response to blue light irradiation. 2 molecules of FMN bind covalently to cysteines after exposure to blue light and are reversed in the dark. As to expression, present in guard cells (at protein level).

It localises to the cell membrane. Its subcellular location is the cytoplasm. It carries out the reaction L-seryl-[protein] + ATP = O-phospho-L-seryl-[protein] + ADP + H(+). It catalyses the reaction L-threonyl-[protein] + ATP = O-phospho-L-threonyl-[protein] + ADP + H(+). With respect to regulation, autophosphorylation is inhibited by staurosporine, but not by tyrphostin 9, sphingosine, GW5074 and BML-265. Functionally, protein kinase that acts as a blue light (BL) photoreceptor in a signal-transduction pathway for photo-induced movements. Triggers the phosphorylation of AHA1 and AHA2 C-terminal penultimate Thr in guard cells to activate them and induce stomatal opening in response to blue light (BL). Also phosphorylates BLUS1, a kinase involved in stomatal opening. Mediates the phosphorylation of CBC1 in stomata, but not of CBC2, in response to blue light. Required for blue light mediated mRNA destabilization. Mediates calcium spiking of extracellular origin in response to a low rate of blue light. Also mediates rapid membrane depolarization and growth inhibition in response to blue light. Necessary for root phototropism. Involved in hypocotyl phototropism under a low rate but not under a high rate of blue light. Contributes to the chloroplast accumulation but seems not to be required for chloroplast translocation. Regulates stomata opening and photomorphogenesis response of leaf tissue. Confers sensitivity to drought. Not involved in hypocotyl elongation inhibition, anthocyanin accumulation or cotyledon opening. Involved in the regulation of leaf position and morphology via the phosphorylation of ABCB19 during blue light responses to modulate auxin distribution. The sequence is that of Phototropin-1 from Arabidopsis thaliana (Mouse-ear cress).